The primary structure comprises 159 residues: MDATFWALVALIIFVGILLYMKVPGMLAGSLDARAERIKNELEEARRLREEAQQLLAEYQRKRREAEQEAKELVDAAKREAKLIVSDAKVKTEEYVSRRTALAEQKIAQAERDAVNEVRSRAVDVAVAAAGKLLAEKIDTKTGSELFKASLQDVKTRLN.

Residues 1–21 (MDATFWALVALIIFVGILLYM) traverse the membrane as a helical segment.

This sequence belongs to the ATPase B chain family. In terms of assembly, F-type ATPases have 2 components, F(1) - the catalytic core - and F(0) - the membrane proton channel. F(1) has five subunits: alpha(3), beta(3), gamma(1), delta(1), epsilon(1). F(0) has three main subunits: a(1), b(2) and c(10-14). The alpha and beta chains form an alternating ring which encloses part of the gamma chain. F(1) is attached to F(0) by a central stalk formed by the gamma and epsilon chains, while a peripheral stalk is formed by the delta and b chains.

Its subcellular location is the cell inner membrane. Functionally, f(1)F(0) ATP synthase produces ATP from ADP in the presence of a proton or sodium gradient. F-type ATPases consist of two structural domains, F(1) containing the extramembraneous catalytic core and F(0) containing the membrane proton channel, linked together by a central stalk and a peripheral stalk. During catalysis, ATP synthesis in the catalytic domain of F(1) is coupled via a rotary mechanism of the central stalk subunits to proton translocation. Its function is as follows. Component of the F(0) channel, it forms part of the peripheral stalk, linking F(1) to F(0). This chain is ATP synthase subunit b 2, found in Chelativorans sp. (strain BNC1).